We begin with the raw amino-acid sequence, 325 residues long: Holliday junction branch migration complex subunit RuvB (325 aa).

Residues 1 to 180 are large ATPase domain (RuvB-L); that stretch reads MKNQLLDAKV…FGIHLKLNFY (180 aa). ATP contacts are provided by residues Leu19, Arg20, Gly61, Lys64, Thr65, Thr66, 127–129, Arg170, Tyr180, and Arg217; that span reads EDF. Thr65 contacts Mg(2+). The small ATPAse domain (RuvB-S) stretch occupies residues 181–251; it reads SCEELTKIVE…ITDYALNQLG (71 aa). A head domain (RuvB-H) region spans residues 254–325; that stretch reads KLGLDSSDHK…ITANALKHLH (72 aa). The DNA site is built by Arg290, Arg309, and Arg314.

Belongs to the RuvB family. In terms of assembly, homohexamer. Forms an RuvA(8)-RuvB(12)-Holliday junction (HJ) complex. HJ DNA is sandwiched between 2 RuvA tetramers; dsDNA enters through RuvA and exits via RuvB. An RuvB hexamer assembles on each DNA strand where it exits the tetramer. Each RuvB hexamer is contacted by two RuvA subunits (via domain III) on 2 adjacent RuvB subunits; this complex drives branch migration. In the full resolvosome a probable DNA-RuvA(4)-RuvB(12)-RuvC(2) complex forms which resolves the HJ.

Its subcellular location is the cytoplasm. It carries out the reaction ATP + H2O = ADP + phosphate + H(+). In terms of biological role, the RuvA-RuvB-RuvC complex processes Holliday junction (HJ) DNA during genetic recombination and DNA repair, while the RuvA-RuvB complex plays an important role in the rescue of blocked DNA replication forks via replication fork reversal (RFR). RuvA specifically binds to HJ cruciform DNA, conferring on it an open structure. The RuvB hexamer acts as an ATP-dependent pump, pulling dsDNA into and through the RuvAB complex. RuvB forms 2 homohexamers on either side of HJ DNA bound by 1 or 2 RuvA tetramers; 4 subunits per hexamer contact DNA at a time. Coordinated motions by a converter formed by DNA-disengaged RuvB subunits stimulates ATP hydrolysis and nucleotide exchange. Immobilization of the converter enables RuvB to convert the ATP-contained energy into a lever motion, pulling 2 nucleotides of DNA out of the RuvA tetramer per ATP hydrolyzed, thus driving DNA branch migration. The RuvB motors rotate together with the DNA substrate, which together with the progressing nucleotide cycle form the mechanistic basis for DNA recombination by continuous HJ branch migration. Branch migration allows RuvC to scan DNA until it finds its consensus sequence, where it cleaves and resolves cruciform DNA. The chain is Holliday junction branch migration complex subunit RuvB from Orientia tsutsugamushi (strain Ikeda) (Rickettsia tsutsugamushi).